A 2056-amino-acid polypeptide reads, in one-letter code: E3 ubiquitin-protein ligase TRIP12 (2056 aa).

Composition is skewed to polar residues over residues 1–10 and 18–27; these read MSSRPNNNPG and RNTAGAQPQE. The segment at 1–440 is disordered; it reads MSSRPNNNPG…SGESESDDSE (440 aa). Residues 39-51 show a composition bias toward basic and acidic residues; that stretch reads AENKTHSLPESRK. Composition is skewed to polar residues over residues 58–67 and 153–168; these read KVQSNTTSGP and SQEQPFPSASLPSTSK. Composition is skewed to low complexity over residues 213–226 and 234–253; these read LSKLASKSATSAKA and SSSSASTSSSSSAVASVSAA. Composition is skewed to polar residues over residues 317 to 327 and 363 to 375; these read PGSSKTETSKP and QKTTGSCASTSRR. Residues 383–395 show a composition bias toward basic and acidic residues; that stretch reads AAAEARRQEKMAD. A compositionally biased stretch (low complexity) spans 415-433; sequence GAAASSSVAGAVGMTTSGE. The WWE domain maps to 791–905; it reads MLKKGNAQNT…DPELAKSFIK (115 aa). Over residues 1027–1042 the composition is skewed to low complexity; sequence TTISTGSGTASGNSAA. 3 disordered regions span residues 1027–1147, 1465–1500, and 1632–1651; these read TTIS…ASKD, EEEESAKDTVGGKRGRAQTAPTKTSPRNSKKHDELW, and TNPEINQSDSQDSRVAPRLD. Basic residues predominate over residues 1069 to 1082; the sequence is KRKRLPKRGPRRPK. The span at 1085 to 1094 shows a compositional bias: basic and acidic residues; the sequence is PPRDEDKVDN. 2 stretches are compositionally biased toward polar residues: residues 1095-1106 and 1119-1129; these read QAKSPTTTQSPK and RLSTQSNSNNI. Residues 1560–1634 are K-box; that stretch reads EIIPTSEFNN…AMQRLLDTNP (75 aa). Residues 1949 to 2056 form the HECT domain; the sequence is PDHGYTHDSR…REGQQSFHLS (108 aa). Cys2023 (glycyl thioester intermediate) is an active-site residue.

This sequence belongs to the UPL family. K-HECT subfamily.

It is found in the nucleus. Its subcellular location is the nucleoplasm. The catalysed reaction is S-ubiquitinyl-[E2 ubiquitin-conjugating enzyme]-L-cysteine + [acceptor protein]-L-lysine = [E2 ubiquitin-conjugating enzyme]-L-cysteine + N(6)-ubiquitinyl-[acceptor protein]-L-lysine.. It participates in protein modification; protein ubiquitination. Functionally, E3 ubiquitin-protein ligase involved in ubiquitin fusion degradation (UFD) pathway and regulation of DNA repair. Part of the ubiquitin fusion degradation (UFD) pathway, a process that mediates ubiquitination of protein at their N-terminus, regardless of the presence of lysine residues in target proteins. Acts as a key regulator of DNA damage response by acting as a suppressor of RNF168, an E3 ubiquitin-protein ligase that promotes accumulation of 'Lys-63'-linked histone H2A and H2AX at DNA damage sites, thereby acting as a guard against excessive spreading of ubiquitinated chromatin at damaged chromosomes. The protein is E3 ubiquitin-protein ligase TRIP12 (trip12) of Xenopus tropicalis (Western clawed frog).